A 304-amino-acid polypeptide reads, in one-letter code: Ribonuclease Z (304 aa).

7 residues coordinate Zn(2+): H61, H63, D65, H66, H138, D206, and H265. D65 (proton acceptor) is an active-site residue.

The protein belongs to the RNase Z family. As to quaternary structure, homodimer. The cofactor is Zn(2+).

The enzyme catalyses Endonucleolytic cleavage of RNA, removing extra 3' nucleotides from tRNA precursor, generating 3' termini of tRNAs. A 3'-hydroxy group is left at the tRNA terminus and a 5'-phosphoryl group is left at the trailer molecule.. In terms of biological role, zinc phosphodiesterase, which displays some tRNA 3'-processing endonuclease activity. Probably involved in tRNA maturation, by removing a 3'-trailer from precursor tRNA. The protein is Ribonuclease Z of Lachnoclostridium phytofermentans (strain ATCC 700394 / DSM 18823 / ISDg) (Clostridium phytofermentans).